A 454-amino-acid chain; its full sequence is Serine/threonine-protein kinase NLK2 (454 aa).

A Protein kinase domain is found at 67–356; the sequence is PEPDRPIGYG…AKDALAHPYL (290 aa). Residues 73–81 and Lys-96 each bind ATP; that span reads IGYGAFGVV. The active-site Proton acceptor is the Asp-193.

The protein belongs to the protein kinase superfamily. CMGC Ser/Thr protein kinase family. MAP kinase subfamily. Interacts with sox11, hmgxb4/hmg2l1, rnf138/narf, stat3.1 and mef2a. Requires Mg(2+) as cofactor.

Its subcellular location is the nucleus. It localises to the cytoplasm. It catalyses the reaction L-seryl-[protein] + ATP = O-phospho-L-seryl-[protein] + ADP + H(+). The enzyme catalyses L-threonyl-[protein] + ATP = O-phospho-L-threonyl-[protein] + ADP + H(+). Activated by tyrosine and threonine phosphorylation. Functionally, negatively regulates Wnt/beta-catenin-signaling during development. Plays a role together with sox11 in neural induction during early embryogenesis. Involved in TGFbeta-mediated mesoderm induction in early embryos, acting downstream of map3k7/tak1 to phosphorylate stat3. Augments the rnf138/narf-directed ubiquitination and degradation of tcf/lef by enhancing the association of rnf138/narf and tcf/lef. Phosphorylates mef2a to play a role in anterior neural development, including eye formation. This chain is Serine/threonine-protein kinase NLK2 (nlk.2), found in Xenopus tropicalis (Western clawed frog).